A 61-amino-acid chain; its full sequence is Photosystem II reaction center protein K (61 aa).

Residues 1–24 (MLNIFNLVCICIHSVLYSSSFFSA) constitute a propeptide that is removed on maturation. The helical transmembrane segment at 36–56 (IVDIMPVIPLLFFLLAFVWQA) threads the bilayer.

This sequence belongs to the PsbK family. As to quaternary structure, PSII is composed of 1 copy each of membrane proteins PsbA, PsbB, PsbC, PsbD, PsbE, PsbF, PsbH, PsbI, PsbJ, PsbK, PsbL, PsbM, PsbT, PsbX, PsbY, PsbZ, Psb30/Ycf12, at least 3 peripheral proteins of the oxygen-evolving complex and a large number of cofactors. It forms dimeric complexes.

It localises to the plastid. Its subcellular location is the chloroplast thylakoid membrane. In terms of biological role, one of the components of the core complex of photosystem II (PSII). PSII is a light-driven water:plastoquinone oxidoreductase that uses light energy to abstract electrons from H(2)O, generating O(2) and a proton gradient subsequently used for ATP formation. It consists of a core antenna complex that captures photons, and an electron transfer chain that converts photonic excitation into a charge separation. The protein is Photosystem II reaction center protein K of Glycine max (Soybean).